The chain runs to 419 residues: UDP-N-acetylglucosamine 1-carboxyvinyltransferase (419 aa).

22–23 (KN) is a phosphoenolpyruvate binding site. Arg91 is a UDP-N-acetyl-alpha-D-glucosamine binding site. The active-site Proton donor is Cys115. Cys115 carries the 2-(S-cysteinyl)pyruvic acid O-phosphothioketal modification. UDP-N-acetyl-alpha-D-glucosamine-binding positions include 120-124 (RPVDL), 160-163 (KVSV), Asp305, and Ile327.

This sequence belongs to the EPSP synthase family. MurA subfamily.

It localises to the cytoplasm. It catalyses the reaction phosphoenolpyruvate + UDP-N-acetyl-alpha-D-glucosamine = UDP-N-acetyl-3-O-(1-carboxyvinyl)-alpha-D-glucosamine + phosphate. Its pathway is cell wall biogenesis; peptidoglycan biosynthesis. In terms of biological role, cell wall formation. Adds enolpyruvyl to UDP-N-acetylglucosamine. The polypeptide is UDP-N-acetylglucosamine 1-carboxyvinyltransferase (Klebsiella pneumoniae subsp. pneumoniae (strain ATCC 700721 / MGH 78578)).